A 247-amino-acid polypeptide reads, in one-letter code: OCIA domain-containing protein 1 (247 aa).

The OCIA domain occupies 1 to 112 (MNGRADFREP…KKLENSPLGE (112 aa)). Phosphoserine occurs at positions 108 and 116. The segment at 116–247 (SGELRRSLPP…VNKYGDTWDE (132 aa)) is disordered. 2 stretches are compositionally biased toward polar residues: residues 136–146 (SNVSGQSSFGT) and 168–177 (ASMNESTPTG). Basic and acidic residues-rich tracts occupy residues 192–210 (DSPKRKSVTYEELRNKNRE) and 218–240 (HKTDPSVRPMQERGPQKEVKVNK). 2 positions are modified to phosphoserine: Ser-193 and Ser-198.

Belongs to the OCIAD1 family. As to quaternary structure, interacts with OCIAD2. Interacts with STAT3.

Its subcellular location is the endosome. In terms of biological role, maintains stem cell potency. Increases STAT3 phosphorylation and controls ERK phosphorylation. May act as a scaffold, increasing STAT3 recruitment onto endosomes. The polypeptide is OCIA domain-containing protein 1 (Rattus norvegicus (Rat)).